The chain runs to 313 residues: Pantothenate synthetase (313 aa).

43-50 (MGALHEGH) contacts ATP. His-50 (proton donor) is an active-site residue. Gln-75 contributes to the (R)-pantoate binding site. Beta-alanine is bound at residue Gln-75. 161-164 (GEKD) contributes to the ATP binding site. Residue Gln-167 coordinates (R)-pantoate. ATP contacts are provided by residues Val-190 and 198–201 (LSSR).

Belongs to the pantothenate synthetase family. Homodimer.

It localises to the cytoplasm. It carries out the reaction (R)-pantoate + beta-alanine + ATP = (R)-pantothenate + AMP + diphosphate + H(+). It participates in cofactor biosynthesis; (R)-pantothenate biosynthesis; (R)-pantothenate from (R)-pantoate and beta-alanine: step 1/1. Catalyzes the condensation of pantoate with beta-alanine in an ATP-dependent reaction via a pantoyl-adenylate intermediate. The chain is Pantothenate synthetase from Mycobacterium sp. (strain KMS).